We begin with the raw amino-acid sequence, 496 residues long: Guanosine-5'-triphosphate,3'-diphosphate pyrophosphatase (496 aa).

Belongs to the GppA/Ppx family. GppA subfamily.

It catalyses the reaction guanosine 3'-diphosphate 5'-triphosphate + H2O = guanosine 3',5'-bis(diphosphate) + phosphate + H(+). The protein operates within purine metabolism; ppGpp biosynthesis; ppGpp from GTP: step 2/2. Its function is as follows. Catalyzes the conversion of pppGpp to ppGpp. Guanosine pentaphosphate (pppGpp) is a cytoplasmic signaling molecule which together with ppGpp controls the 'stringent response', an adaptive process that allows bacteria to respond to amino acid starvation, resulting in the coordinated regulation of numerous cellular activities. The chain is Guanosine-5'-triphosphate,3'-diphosphate pyrophosphatase from Aeromonas salmonicida (strain A449).